The sequence spans 195 residues: dCTP deaminase (195 aa).

DCTP contacts are provided by residues arginine 109–arginine 114, aspartate 127, threonine 135–glutamate 137, tyrosine 170, lysine 177, and glutamine 181. Glutamate 137 acts as the Proton donor/acceptor in catalysis.

It belongs to the dCTP deaminase family. As to quaternary structure, homotrimer.

The catalysed reaction is dCTP + H2O + H(+) = dUTP + NH4(+). The protein operates within pyrimidine metabolism; dUMP biosynthesis; dUMP from dCTP (dUTP route): step 1/2. In terms of biological role, catalyzes the deamination of dCTP to dUTP. This is dCTP deaminase from Rhodospirillum rubrum (strain ATCC 11170 / ATH 1.1.1 / DSM 467 / LMG 4362 / NCIMB 8255 / S1).